Reading from the N-terminus, the 235-residue chain is Probable pyridoxal 5'-phosphate synthase subunit PDX1 (235 aa).

Lys16 serves as the catalytic Schiff-base intermediate with D-ribose 5-phosphate. Arg104 contacts D-glyceraldehyde 3-phosphate. D-ribose 5-phosphate contacts are provided by residues Gly153 and Gly174 to Ser175.

Belongs to the PdxS/SNZ family.

It catalyses the reaction aldehydo-D-ribose 5-phosphate + D-glyceraldehyde 3-phosphate + L-glutamine = pyridoxal 5'-phosphate + L-glutamate + phosphate + 3 H2O + H(+). The protein operates within cofactor biosynthesis; pyridoxal 5'-phosphate biosynthesis. Catalyzes the formation of pyridoxal 5'-phosphate from ribose 5-phosphate (RBP), glyceraldehyde 3-phosphate (G3P) and ammonia. The ammonia is provided by PDX2. Can also use ribulose 5-phosphate and dihydroxyacetone phosphate as substrates, resulting from enzyme-catalyzed isomerization of RBP and G3P, respectively. Also plays an indirect role in resistance to singlet oxygen-generating photosensitizers. The chain is Probable pyridoxal 5'-phosphate synthase subunit PDX1 from Stellaria longipes (Longstalk starwort).